The chain runs to 264 residues: 3-methyl-2-oxobutanoate hydroxymethyltransferase (264 aa).

Residues aspartate 45 and aspartate 84 each coordinate Mg(2+). 3-methyl-2-oxobutanoate is bound by residues aspartate 45–serine 46, aspartate 84, and lysine 112. Residue glutamate 114 participates in Mg(2+) binding. The Proton acceptor role is filled by glutamate 181.

Belongs to the PanB family. In terms of assembly, homodecamer; pentamer of dimers. Mg(2+) serves as cofactor.

It localises to the cytoplasm. The enzyme catalyses 3-methyl-2-oxobutanoate + (6R)-5,10-methylene-5,6,7,8-tetrahydrofolate + H2O = 2-dehydropantoate + (6S)-5,6,7,8-tetrahydrofolate. It functions in the pathway cofactor biosynthesis; (R)-pantothenate biosynthesis; (R)-pantoate from 3-methyl-2-oxobutanoate: step 1/2. In terms of biological role, catalyzes the reversible reaction in which hydroxymethyl group from 5,10-methylenetetrahydrofolate is transferred onto alpha-ketoisovalerate to form ketopantoate. The chain is 3-methyl-2-oxobutanoate hydroxymethyltransferase from Colwellia psychrerythraea (strain 34H / ATCC BAA-681) (Vibrio psychroerythus).